The chain runs to 415 residues: Serine hydroxymethyltransferase (415 aa).

Residues Leu119 and 123 to 125 (GHL) each bind (6S)-5,6,7,8-tetrahydrofolate. Lys228 carries the N6-(pyridoxal phosphate)lysine modification. Residue 353–355 (SAF) coordinates (6S)-5,6,7,8-tetrahydrofolate.

Belongs to the SHMT family. Homodimer. Requires pyridoxal 5'-phosphate as cofactor.

Its subcellular location is the cytoplasm. It carries out the reaction (6R)-5,10-methylene-5,6,7,8-tetrahydrofolate + glycine + H2O = (6S)-5,6,7,8-tetrahydrofolate + L-serine. The protein operates within one-carbon metabolism; tetrahydrofolate interconversion. Its pathway is amino-acid biosynthesis; glycine biosynthesis; glycine from L-serine: step 1/1. Its function is as follows. Catalyzes the reversible interconversion of serine and glycine with tetrahydrofolate (THF) serving as the one-carbon carrier. Also exhibits THF-independent aldolase activity toward beta-hydroxyamino acids, producing glycine and aldehydes, via a retro-aldol mechanism. The chain is Serine hydroxymethyltransferase from Halobacterium salinarum (strain ATCC 29341 / DSM 671 / R1).